The chain runs to 455 residues: Hydroxymethylglutaryl-CoA synthase 2 (455 aa).

Glutamate 86 (proton donor/acceptor) is an active-site residue. Residue cysteine 120 is the Acyl-thioester intermediate of the active site. (3S)-3-hydroxy-3-methylglutaryl-CoA-binding residues include cysteine 120, threonine 161, serine 211, histidine 255, lysine 264, asparagine 329, and serine 363. Catalysis depends on histidine 255, which acts as the Proton donor/acceptor.

Belongs to the thiolase-like superfamily. HMG-CoA synthase family.

The catalysed reaction is acetoacetyl-CoA + acetyl-CoA + H2O = (3S)-3-hydroxy-3-methylglutaryl-CoA + CoA + H(+). Its pathway is metabolic intermediate biosynthesis; (R)-mevalonate biosynthesis; (R)-mevalonate from acetyl-CoA: step 2/3. This enzyme condenses acetyl-CoA with acetoacetyl-CoA to form HMG-CoA, which is the substrate for HMG-CoA reductase. The protein is Hydroxymethylglutaryl-CoA synthase 2 (HMGCS-2) of Blattella germanica (German cockroach).